Reading from the N-terminus, the 643-residue chain is Clathrin interactor 1 (643 aa).

The ENTH domain maps to 16–149; the sequence is NVVMNYSEIE…QDDDRLREER (134 aa). Arginine 29 serves as a coordination point for a 1,2-diacyl-sn-glycero-3-phospho-(1D-myo-inositol-4,5-bisphosphate). An interaction with VTI1B region spans residues 52–54; sequence FMY. Position 67 (arginine 67) interacts with a 1,2-diacyl-sn-glycero-3-phospho-(1D-myo-inositol-4,5-bisphosphate). 2 interaction with VTI1B regions span residues 94–96 and 142–153; these read SER and DDRLREERKKAK. A phosphoserine mark is found at serine 163, serine 166, serine 173, serine 205, serine 210, serine 227, serine 245, and serine 299. The segment at 219–331 is disordered; it reads FRRKDREDSP…SSGDLVDLFD (113 aa). The span at 222-239 shows a compositional bias: basic and acidic residues; sequence KDREDSPERCSDSDEEKK. Over residues 300–310 the composition is skewed to polar residues; the sequence is PDQNASTHTPQ. Threonine 308 is subject to Phosphothreonine. Over residues 311–323 the composition is skewed to low complexity; that stretch reads SSLKTSVPSSKSS. Serine 312 and serine 642 each carry phosphoserine.

The protein belongs to the epsin family. In terms of assembly, binds clathrin heavy chain and AP-2. Interacts with VTI1B. Interacts with GGA2 (via GAE domain). Interacts with AP1G1 (via GAE domain). Interacts with AP1G2 (via GAE domain).

It localises to the cytoplasm. The protein localises to the perinuclear region. It is found in the membrane. Its subcellular location is the cytoplasmic vesicle. The protein resides in the clathrin-coated vesicle. Functionally, binds to membranes enriched in phosphatidylinositol 4,5-bisphosphate (PtdIns(4,5)P2). May have a role in transport via clathrin-coated vesicles from the trans-Golgi network to endosomes. Stimulates clathrin assembly. The polypeptide is Clathrin interactor 1 (CLINT1) (Bos taurus (Bovine)).